Here is a 395-residue protein sequence, read N- to C-terminus: Chaperone protein DnaJ 2 (395 aa).

In terms of domain architecture, J spans 10 to 75; sequence DYYADLGVSK…TKRREYDDLK (66 aa). The CR-type zinc-finger motif lies at 165–242; that stretch reads GTTIPVELTG…CRGRGTVRRT (78 aa). Zn(2+) contacts are provided by Cys178, Cys181, Cys194, Cys197, Cys216, Cys219, Cys230, and Cys233. 4 CXXCXGXG motif repeats span residues 178 to 185, 194 to 201, 216 to 223, and 230 to 237; these read CNTCHGSG, CGQCNGSG, CTNCGGTG, and CVDCRGRG.

The protein belongs to the DnaJ family. In terms of assembly, homodimer. Zn(2+) is required as a cofactor.

It is found in the cytoplasm. Functionally, participates actively in the response to hyperosmotic and heat shock by preventing the aggregation of stress-denatured proteins and by disaggregating proteins, also in an autonomous, DnaK-independent fashion. Unfolded proteins bind initially to DnaJ; upon interaction with the DnaJ-bound protein, DnaK hydrolyzes its bound ATP, resulting in the formation of a stable complex. GrpE releases ADP from DnaK; ATP binding to DnaK triggers the release of the substrate protein, thus completing the reaction cycle. Several rounds of ATP-dependent interactions between DnaJ, DnaK and GrpE are required for fully efficient folding. Also involved, together with DnaK and GrpE, in the DNA replication of plasmids through activation of initiation proteins. The polypeptide is Chaperone protein DnaJ 2 (Corynebacterium efficiens (strain DSM 44549 / YS-314 / AJ 12310 / JCM 11189 / NBRC 100395)).